A 273-amino-acid chain; its full sequence is Undecaprenyl-diphosphatase (273 aa).

7 helical membrane passes run 6–26 (SLLIAAILGVVEGLTEFLPVS), 45–65 (AKTFEVVIQLGSILAVVVMFW), 90–110 (LTLIHILLGMIPAVVLGLLFH), 116–136 (LFNPINVMYALVVGGLLLIAA), 190–210 (YAASEFSFLLAVPMMMGATAL), 222–242 (GDISMFAVGFITAFVVALIAI), and 252–272 (ISFIPFAIYRFIVAAAVYVVF).

The protein belongs to the UppP family.

It is found in the cell inner membrane. It catalyses the reaction di-trans,octa-cis-undecaprenyl diphosphate + H2O = di-trans,octa-cis-undecaprenyl phosphate + phosphate + H(+). Functionally, catalyzes the dephosphorylation of undecaprenyl diphosphate (UPP). Confers resistance to bacitracin. This is Undecaprenyl-diphosphatase from Shigella sonnei (strain Ss046).